An 872-amino-acid chain; its full sequence is Extended synaptotagmin-2-A (872 aa).

Residues 1–25 form a disordered region; it reads MSSESSAEKGPPPSPAENVQPGVPP. Topologically, residues 1 to 31 are cytoplasmic; sequence MSSESSAEKGPPPSPAENVQPGVPPAAEEPG. The chain crosses the membrane as a helical span at residues 32–52; that stretch reads MISVDIAGLFYQFSKTFILIF. Residues 53–55 are Lumenal-facing; it reads PVY. The chain crosses the membrane as a helical span at residues 56 to 76; that stretch reads VLGYFGLSFSWLLIALVLLLW. The Cytoplasmic segment spans residues 77 to 872; it reads WRRNKGNKNS…EDGTRPAVSS (796 aa). Positions 119–298 constitute an SMP-LTD domain; the sequence is DIERAEWLNK…LPNRITVPLV (180 aa). 2 consecutive C2 domains span residues 297-417 and 442-588; these read LVSD…DEWF and NLDQ…HLNN. Ca(2+)-binding residues include K328, D329, D341, D388, E389, D390, D392, D394, and D395. The segment covering 608–617 has biased composition (basic and acidic residues); sequence KPVRSPDEQH. Residues 608–711 are disordered; it reads KPVRSPDEQH…EPTPSIASDI (104 aa). The segment covering 632-652 has biased composition (pro residues); sequence PPTPQMPSPSPAVAHKPPPTP. Over residues 664–681 the composition is skewed to polar residues; sequence NKGTPPSASPKSPTELHQ. Residues 682 to 696 show a composition bias toward low complexity; it reads SSSSLSGSSFTYSPS. The 123-residue stretch at 737-859 folds into the C2 3 domain; that stretch reads PLGQIQLTIR…DAAKGWTQWY (123 aa). Residues 784-791 are required for phosphatidylinositol 4,5-bisphosphate-dependent location at the cell membrane; that stretch reads KRRSGRRK.

The protein belongs to the extended synaptotagmin family. In terms of assembly, interacts with fgfr1 that has been activated by fgf1 binding. Interacts (via C2 domains) with the AP-2 complex (via an alpha subunit). Identified in a complex with the AP-2 complex and fgfr1.

The protein resides in the cell membrane. Its subcellular location is the endoplasmic reticulum membrane. In terms of biological role, tethers the endoplasmic reticulum to the cell membrane and promotes the formation of appositions between the endoplasmic reticulum and the cell membrane. Binds glycerophospholipids in a barrel-like domain and may play a role in cellular lipid transport. Plays a role in the rapid internalization of fgfr1 that has been activated by fgf1 binding; this occurs most likely via the AP-2 complex. Required for normal fgf signaling and the activation of downstream signaling cascades via its role in the internalization of activated fgfr1. Required for normal embryonic development via its role in fgf signaling and the downstream regulation of t/xBRA expression. This is Extended synaptotagmin-2-A (esyt2-a) from Xenopus laevis (African clawed frog).